Consider the following 384-residue polypeptide: Small ribosomal subunit protein mS31 (384 aa).

Residues 1–54 (MLHRIPAFLRPRPFSGLPLSCGNRDVSVAVLPAAQSGAVRTENNIQRHFCTSRS) constitute a mitochondrion transit peptide. Residues 101 to 136 (TANVKTPKPRGRKPSASLEATVDRLQKAPEDPPKKR) are disordered. Residues 121 to 136 (TVDRLQKAPEDPPKKR) show a composition bias toward basic and acidic residues.

Belongs to the mitochondrion-specific ribosomal protein mS31 family. In terms of assembly, component of the mitochondrial ribosome small subunit (28S) which comprises a 12S rRNA and about 30 distinct proteins.

It localises to the mitochondrion. This Mus musculus (Mouse) protein is Small ribosomal subunit protein mS31 (Mrps31).